A 655-amino-acid polypeptide reads, in one-letter code: Probable inactive receptor kinase At1g48480 (655 aa).

A signal peptide spans 1–32; the sequence is MRVFFFPNSSMAILSVFLSLLLLSLPLPSTQD. LRR repeat units follow at residues 71–95, 98–120, 122–144, 146–169, 170–192, and 194–215; these read SNRVTALRLPGVALSGDIPEGIFGN, QLRTLSLRLNALSGSLPKDLSTS, NLRHLYLQGNRFSGEIPEVLFSL, HLVRLNLASNSFTGEISSGFTNLT, KLKTLFLENNQLSGSIPDLDLPL, and QFNVSNNSLNGSIPKNLQRFES. Residues 234 to 260 form a disordered region; it reads EETVPSQPTSGGNRTPPSVEGSEEKKK. Over residues 237 to 249 the composition is skewed to polar residues; the sequence is VPSQPTSGGNRTP. A helical transmembrane segment spans residues 269–289; it reads IAGIVIGCVVGFALIVLILMV. The region spanning 371 to 646 is the Protein kinase domain; it reads RASAEVLGKG…RKMENLRPYS (276 aa). Serine 373 carries the phosphoserine modification. 377–385 serves as a coordination point for ATP; it reads LGKGTFGTA. Threonine 394 is subject to Phosphothreonine. Lysine 399 contributes to the ATP binding site. Serine 450 is modified (phosphoserine). At threonine 526 the chain carries Phosphothreonine. Serine 546 is modified (phosphoserine). Phosphothreonine is present on threonine 622.

This sequence belongs to the protein kinase superfamily. As to expression, highly expressed in seedlings and leaves. Lower expression in roots, stems, flowers and siliques. Detected in the vascular tissues of roots, in the trichomes of young rosettes leaves and hydathodes, in the floral abscission zones, in filament apex and stomata cells of anthers, in inflorescence stems and in sepals.

The protein resides in the cell membrane. The protein is Probable inactive receptor kinase At1g48480 (RKL1) of Arabidopsis thaliana (Mouse-ear cress).